The primary structure comprises 836 residues: Protein O-mannosyl-transferase TMTC2 (836 aa).

A helical membrane pass occupies residues 1–21 (MIAELVSSALGLALYLNTLSA). At 22 to 77 (DFCYDDSRAIKTNQDLLPETPWTHIFYNDFWGTLLTHSGSHKSYRPLCTLSFRLNH) the chain is on the extracellular side. A helical transmembrane segment spans residues 78–98 (AIGGLNPWSYHLVNVLLHAAV). At 99-107 (TGLFTRFSK) the chain is on the cytoplasmic side. The chain crosses the membrane as a helical span at residues 108–128 (ALLGDGYWTFMAGLMFASHPI). Topologically, residues 129-132 (HTEA) are extracellular. Residues 133–153 (VAGIVGRADVGASLFFLLSLL) traverse the membrane as a helical segment. At 154 to 168 (CYIKHCSTRGYSART) the chain is on the cytoplasmic side. A run of 2 helical transmembrane segments spans residues 169–184 (WGWF…CSML) and 185–204 (WKEQ…VFVF). The Cytoplasmic segment spans residues 205-220 (HRLKMKQILPTIYKRK). Residues 221 to 241 (NLSLFLSISLLTFWGTCLLGA) form a helical membrane-spanning segment. Residues 242-312 (RLYWMGNKPP…KTVCDWRNLH (71 aa)) lie on the Extracellular side of the membrane. The helical transmembrane segment at 313 to 333 (TVAFYSGLLLLAYCGLKNPSL) threads the bilayer. Topologically, residues 334-392 (EGECNGKALTNGKQNANGHSCHSDVEYRNSEMKPSFASKVENGIKNCVPQRTQLPSTEN) are cytoplasmic. The helical transmembrane segment at 393 to 415 (IVILSLSLLIIPFIPATNLFFYV) threads the bilayer. The Extracellular segment spans residues 416-422 (GFVIAER). Residues 423–443 (VLYIPSMGFCLLITVGARALY) traverse the membrane as a helical segment. The Cytoplasmic segment spans residues 444-449 (VKVQKR). A helical membrane pass occupies residues 450 to 470 (FLKSLVFYATATLIVFYGVKT). Residues 471-836 (AIRNGDWQNE…EKQGLKTSKT (366 aa)) lie on the Extracellular side of the membrane. TPR repeat units lie at residues 493–526 (AKAW…RSNM), 527–560 (ADML…RPTL), 561–594 (ASAY…PDEN), 606–639 (TSCL…MPRH), 643–676 (QSLY…KTDH), 677–710 (IPAH…DPTK), 711–744 (GNCY…DNTE), 745–778 (FDVV…RPNY), and 779–812 (PAAL…KPDD).

This sequence belongs to the TMTC family.

Its subcellular location is the membrane. It is found in the endoplasmic reticulum. It catalyses the reaction a di-trans,poly-cis-dolichyl beta-D-mannosyl phosphate + L-seryl-[protein] = 3-O-(alpha-D-mannosyl)-L-seryl-[protein] + a di-trans,poly-cis-dolichyl phosphate + H(+). The enzyme catalyses a di-trans,poly-cis-dolichyl beta-D-mannosyl phosphate + L-threonyl-[protein] = 3-O-(alpha-D-mannosyl)-L-threonyl-[protein] + a di-trans,poly-cis-dolichyl phosphate + H(+). It participates in protein modification; protein glycosylation. In terms of biological role, transfers mannosyl residues to the hydroxyl group of serine or threonine residues. The 4 members of the TMTC family are O-mannosyl-transferases dedicated primarily to the cadherin superfamily, each member seems to have a distinct role in decorating the cadherin domains with O-linked mannose glycans at specific regions. Also acts as O-mannosyl-transferase on other proteins such as PDIA3. This Mus musculus (Mouse) protein is Protein O-mannosyl-transferase TMTC2.